The sequence spans 103 residues: NAD(P)H-quinone oxidoreductase subunit 4L (103 aa).

3 helical membrane passes run 5–25, 32–52, and 66–86; these read LQYCLILAAALFCIGIYGLIT, VLMSIELLLNAVNLNLMGFSN, and IFVITIAAAEAAVGLAIVLAI.

Belongs to the complex I subunit 4L family. As to quaternary structure, NDH-1 can be composed of about 15 different subunits; different subcomplexes with different compositions have been identified which probably have different functions.

It localises to the cellular thylakoid membrane. It carries out the reaction a plastoquinone + NADH + (n+1) H(+)(in) = a plastoquinol + NAD(+) + n H(+)(out). The enzyme catalyses a plastoquinone + NADPH + (n+1) H(+)(in) = a plastoquinol + NADP(+) + n H(+)(out). Its function is as follows. NDH-1 shuttles electrons from an unknown electron donor, via FMN and iron-sulfur (Fe-S) centers, to quinones in the respiratory and/or the photosynthetic chain. The immediate electron acceptor for the enzyme in this species is believed to be plastoquinone. Couples the redox reaction to proton translocation, and thus conserves the redox energy in a proton gradient. Cyanobacterial NDH-1 also plays a role in inorganic carbon-concentration. The sequence is that of NAD(P)H-quinone oxidoreductase subunit 4L from Synechocystis sp. (strain ATCC 27184 / PCC 6803 / Kazusa).